The chain runs to 376 residues: Arginine/serine-rich coiled-coil protein 2 (376 aa).

Positions 1–171 are disordered; it reads MIRTNFLLKQ…PSPPPFRGRN (171 aa). Residues 13–52 are compositionally biased toward basic and acidic residues; sequence RHESKDKSSKRHKSEEHNDKEHSSDKGRERLNSSENGEDR. S45 bears the Phosphoserine mark. Residues 53–155 are compositionally biased toward basic residues; the sequence is HKRKERKSSR…KRIEKPRRFS (103 aa). Residues 171-214 are a coiled coil; sequence NTAMDAQEALARRLERAKKLQEQREKEMVEKQKQQEMAAAAAAT. Residue K317 forms a Glycyl lysine isopeptide (Lys-Gly) (interchain with G-Cter in SUMO1); alternate linkage. A Glycyl lysine isopeptide (Lys-Gly) (interchain with G-Cter in SUMO2); alternate cross-link involves residue K317. The residue at position 318 (S318) is a Phosphoserine.

The protein belongs to the RSRC2 family.

This Rattus norvegicus (Rat) protein is Arginine/serine-rich coiled-coil protein 2 (Rsrc2).